A 635-amino-acid chain; its full sequence is Chaperone protein HtpG (635 aa).

Residues 1–336 (MTTAEAAAPE…SADLPLNLSR (336 aa)) are a; substrate-binding. Residues 337–556 (EMLQDSAILA…ESGIDRRLEK (220 aa)) form a b region. The tract at residues 557–635 (LLASAGRLGD…RVMQRGLPTA (79 aa)) is c.

This sequence belongs to the heat shock protein 90 family. As to quaternary structure, homodimer.

It is found in the cytoplasm. Functionally, molecular chaperone. Has ATPase activity. This chain is Chaperone protein HtpG, found in Azorhizobium caulinodans (strain ATCC 43989 / DSM 5975 / JCM 20966 / LMG 6465 / NBRC 14845 / NCIMB 13405 / ORS 571).